The following is a 222-amino-acid chain: Orotate phosphoribosyltransferase (222 aa).

A 5-phospho-alpha-D-ribose 1-diphosphate-binding site is contributed by Lys29. Phe37–Phe38 provides a ligand contact to orotate. 5-phospho-alpha-D-ribose 1-diphosphate-binding positions include Tyr75–Lys76, Arg101, Lys102, Lys105, His107, and Asp126–Ser134. Orotate-binding residues include Ser130 and Arg158.

Belongs to the purine/pyrimidine phosphoribosyltransferase family. PyrE subfamily. As to quaternary structure, homodimer. Mg(2+) serves as cofactor.

It catalyses the reaction orotidine 5'-phosphate + diphosphate = orotate + 5-phospho-alpha-D-ribose 1-diphosphate. It participates in pyrimidine metabolism; UMP biosynthesis via de novo pathway; UMP from orotate: step 1/2. Its function is as follows. Catalyzes the transfer of a ribosyl phosphate group from 5-phosphoribose 1-diphosphate to orotate, leading to the formation of orotidine monophosphate (OMP). The chain is Orotate phosphoribosyltransferase from Polynucleobacter asymbioticus (strain DSM 18221 / CIP 109841 / QLW-P1DMWA-1) (Polynucleobacter necessarius subsp. asymbioticus).